Reading from the N-terminus, the 408-residue chain is Histidine--tRNA ligase (408 aa).

This sequence belongs to the class-II aminoacyl-tRNA synthetase family. As to quaternary structure, homodimer.

It localises to the cytoplasm. The catalysed reaction is tRNA(His) + L-histidine + ATP = L-histidyl-tRNA(His) + AMP + diphosphate + H(+). This Campylobacter jejuni subsp. jejuni serotype O:6 (strain 81116 / NCTC 11828) protein is Histidine--tRNA ligase.